We begin with the raw amino-acid sequence, 546 residues long: Chaperonin GroEL (546 aa).

ATP-binding positions include 30-33 (TLGP), K51, 87-91 (DGTTT), G415, 479-481 (NAA), and D495.

Belongs to the chaperonin (HSP60) family. In terms of assembly, forms a cylinder of 14 subunits composed of two heptameric rings stacked back-to-back. Interacts with the co-chaperonin GroES.

The protein localises to the cytoplasm. The enzyme catalyses ATP + H2O + a folded polypeptide = ADP + phosphate + an unfolded polypeptide.. In terms of biological role, together with its co-chaperonin GroES, plays an essential role in assisting protein folding. The GroEL-GroES system forms a nano-cage that allows encapsulation of the non-native substrate proteins and provides a physical environment optimized to promote and accelerate protein folding. This Pseudomonas putida (strain ATCC 700007 / DSM 6899 / JCM 31910 / BCRC 17059 / LMG 24140 / F1) protein is Chaperonin GroEL.